We begin with the raw amino-acid sequence, 290 residues long: uncharacterized protein (290 aa).

2 disordered regions span residues 105 to 156 (LKHK…KLTV) and 259 to 290 (EGAQ…KSKK). Residues 114 to 130 (KATQQARKRNFISSKSK) are compositionally biased toward polar residues. Composition is skewed to basic and acidic residues over residues 143–156 (RESK…KLTV) and 261–280 (AQRD…EPVL).

This is an uncharacterized protein from Homo sapiens (Human).